The sequence spans 780 residues: MSEEDWPSPKFREHVIQRLEPELARNRQNAPNLPVPGDARQVEEYVFAKCMSKDEYMRTIAKVINAINCNSKSAAVPSVLQPSQFHSPPCTTAALLGNTPAGGTPGYRAPVPPDPQPTSAQARNPPVTVATTQASTTPSAPNPPGGLPAPSASATAAVAAAVASFPSPDTSIRPGGQITPGSQAPGGGPTPAPNVPFPNGSSQMNGGPAMGQPPPQMGAPNMGGPPNGYGGYGMMNGPPGSGAPMGGNPYNQQIKKDMDQARPWDPSAHMYQQQPQWGAMPPQQPHGYPGRPMNGQGATPTGPSSVLESLINQPQQYPGHHNQMGPPGDRNVAAQRAAAQQQQQQQQQQQQQRPGMVPNQGMMSSEDQTVYSAKLRNMRGSCDSLRTRARQCRHEGNHEAAHKLEVMLSVLEGKRVVSLEYLNHLEMWIARKQDFLNIAPMSQNQNHMGMNDPMMNGEHAMLGNGQVPNPYGGHPGYGHQQYMGPPPPHMQMHQPPMWHQQQHQQQQRMMPQDHMMMQGGGGPVHGMYRGDMGHDPMTSPVNNHRHAPYPNPAAMRNNMRMPNGPGPIGRDRNSMSGSSMSGPSSGAPSMNPMGTPNQKMGTPGSMGGMSGLDDLNYDDFLPNPTPIDALQPTLHVGQNSMNAGPPVQRSNLNETARKELQILDARFEIDPNHQRHDANHIIVVCKIRNQQFPPLRLVVPTTYPAGNVTVDRAVIDLDAYLYDDLQNSVYERLSRPGLSSITDYLNAWEEQVNQYQNQTSGGLDVAFNVGNDFFYDNLNL.

The segment at 1 to 124 (MSEEDWPSPK…PQPTSAQARN (124 aa)) is interaction with nhr-49. Residues 2–96 (SEEDWPSPKF…SPPCTTAALL (95 aa)) form an interaction with sbp-1 region. Disordered stretches follow at residues 91-152 (TTAA…APSA), 166-363 (PSPD…QGMM), and 564-597 (GPGP…GTPN). Low complexity predominate over residues 125-139 (PPVTVATTQASTTPS). The span at 225-245 (PPNGYGGYGMMNGPPGSGAPM) shows a compositional bias: gly residues. Residues 296–316 (QGATPTGPSSVLESLINQPQQ) are compositionally biased toward polar residues. 2 stretches are compositionally biased toward low complexity: residues 333 to 353 (AAQR…QQQR) and 574 to 594 (SMSG…NPMG).

Belongs to the Mediator complex subunit 15 family. Component of the Mediator complex. Interacts with nhr-49, nhr-64 and sbp-1. Expressed in the intestine and head neurons.

The protein resides in the nucleus. In terms of biological role, component of the Mediator complex, a coactivator involved in regulated gene transcription of nearly all RNA polymerase II-dependent genes. Mediator functions as a bridge to convey information from gene-specific regulatory proteins to the basal RNA polymerase II transcription machinery. Mediator is recruited to promoters by direct interactions with regulatory proteins and serves as a scaffold for the assembly of a functional preinitiation complex with RNA polymerase II and the general transcription factors. Required for regulated expression of genes controlling fatty acid desaturation by transcription factors including sbp-1 and nhr-49. Involved in the response to simulated microgravity, in concert with sbp-1, probably acting in the intestine. The polypeptide is Mediator of RNA polymerase II transcription subunit 15 (mdt-15) (Caenorhabditis elegans).